We begin with the raw amino-acid sequence, 338 residues long: UDP-glucose 4-epimerase (338 aa).

NAD(+) contacts are provided by residues 11–12 (YI), 31–36 (DNLCNS), 58–59 (DI), 80–84 (FAGLK), Asn99, Ser124, Tyr149, Lys153, and Phe178. Residues Ser124 and Tyr149 each contribute to the substrate site. Tyr149 functions as the Proton acceptor in the catalytic mechanism. Substrate is bound by residues Asn179, 199–200 (NL), 216–218 (AVF), Arg231, 292–295 (RDGD), and Tyr299.

It belongs to the NAD(P)-dependent epimerase/dehydratase family. In terms of assembly, homodimer. Requires NAD(+) as cofactor.

It carries out the reaction UDP-alpha-D-glucose = UDP-alpha-D-galactose. It functions in the pathway carbohydrate metabolism; galactose metabolism. Its function is as follows. Involved in the metabolism of galactose. Catalyzes the conversion of UDP-galactose (UDP-Gal) to UDP-glucose (UDP-Glc) through a mechanism involving the transient reduction of NAD. This is UDP-glucose 4-epimerase (galE) from Salmonella typhimurium (strain LT2 / SGSC1412 / ATCC 700720).